An 892-amino-acid polypeptide reads, in one-letter code: MDHYDSQQTNDYMQPEEDWDRDLLLDPAWEKQQRKTFTAWCNSHLRKAGTQIENIEEDFRDGLKLMLLLEVISGERLAKPERGKMRVHKISNVNKALDFIASKGVKLVSIGAEEIVDGNVKMTLGMIWTIILRFAIQDISVEETSAKEGLLLWCQRKTAPYKNVNIQNFHISWKDGLGFCALIHRHRPELIDYGKLRKDDPLTNLNTAFDVAERFLDIPKMLDAEDIVGTARPDEKAIMTYVSSFYHAFSGAQKAETAANRICKVLAVNQENEQLMEDYEKLASDLLEWIRRTIPWLENRVPENTMHAMQQKLEDFRDYRRLHKPPKVQEKCQLEINFNTLQTKLRLSNRPAFMPSEGRMVSDINNAWGCLEQAEKGYEEWLLNEIRRLERLDHLAEKFRQKASIHEAWTDGKEAMLRQKDYETATLSEIKALLKKHEAFESDLAAHQDRVEQIAAIAQELNELDYYDSPSVNARCQKICDQWDNLGALTQKRREALERTEKLLETIDQLYLEYAKRAAPFNNWMEGAMEDLQDTFIVHTIEEIQGLTTAHEQFKATLPDADKERLAILGIHNEVSKIVQTYHVNMAGTNPYTTITPQEINGKWDHVRQLVPRRDQALTEEHARQQHNERLRKQFGAQANVIGPWIQTKMEEIGRISIEMHGTLEDQLSHLRQYEKSIVNYKPKIDQLECDHQLIQEALIFDNKHTNYNMEHIRVGWEQLLTTIARTINEVENQILTRDAKGISQEQMNEFRASFNHFDRDHSGTLGPEEFKACLISLGYDIGNDPQGEAEFARIMSIVDPNRLGVVTFQAFIDFMSRETADTDTADQVMASFKILAGDKNYITEDELRRELPPDQAEYCIARMAPYAGPDSVPGALDYMSFSTALYGESDL.

M1 bears the N-acetylmethionine mark. The actin-binding stretch occupies residues 1 to 247; it reads MDHYDSQQTN…IMTYVSSFYH (247 aa). The residue at position 6 (S6) is a Phosphoserine. Y12 is subject to Phosphotyrosine; by FAK1. 2 Calponin-homology (CH) domains span residues 31–135 and 144–250; these read KQQR…LRFA and TSAK…HAFS. An N6-acetyllysine mark is found at K95 and K195. Spectrin repeat units lie at residues 274 to 384, 394 to 499, 509 to 620, and 630 to 733; these read QLME…WLLN, HLAE…ALER, QLYL…ALTE, and RLRK…EVEN. The interaction with DDN stretch occupies residues 274–733; the sequence is QLMEDYEKLA…IARTINEVEN (460 aa). S471 is subject to Phosphoserine. Position 676 is an N6-acetyllysine (K676). S677 carries the phosphoserine modification. EF-hand domains follow at residues 746 to 781 and 787 to 822; these read EQMN…LGYD and QGEA…ETAD. Ca(2+) is bound by residues D759, D761, S763, T765, and E770. S890 carries the phosphoserine modification.

It belongs to the alpha-actinin family. In terms of assembly, homodimer; antiparallel. Interacts with MYOZ2, TTID and LPP. Interacts with DDN. Interacts with PSD. Interacts with MICALL2. Interacts with DNM2 and CTTN. Interacts with PDLIM1. Interacts with PDLIM2. Interacts with PDLIM4 (via PDZ domain). Interacts with IGSF8.

It is found in the cytoplasm. Its subcellular location is the cytoskeleton. The protein resides in the myofibril. The protein localises to the sarcomere. It localises to the z line. It is found in the cell membrane. Its subcellular location is the cell junction. The protein resides in the cell projection. The protein localises to the ruffle. Its function is as follows. F-actin cross-linking protein which is thought to anchor actin to a variety of intracellular structures. Association with IGSF8 regulates the immune synapse formation and is required for efficient T-cell activation. The sequence is that of Alpha-actinin-1 (Actn1) from Mus musculus (Mouse).